The chain runs to 609 residues: UvrABC system protein C (609 aa).

Positions 13-91 (HEPGVYRMYD…IKLYQPRYNV (79 aa)) constitute a GIY-YIG domain. The 36-residue stretch at 201-236 (QQVLDYLIGKMEQASRNLDFEQAARYRDQIQAVRSV) folds into the UVR domain.

The protein belongs to the UvrC family. Interacts with UvrB in an incision complex.

The protein resides in the cytoplasm. The UvrABC repair system catalyzes the recognition and processing of DNA lesions. UvrC both incises the 5' and 3' sides of the lesion. The N-terminal half is responsible for the 3' incision and the C-terminal half is responsible for the 5' incision. This chain is UvrABC system protein C, found in Haemophilus influenzae (strain 86-028NP).